Reading from the N-terminus, the 272-residue chain is Shikimate dehydrogenase (NADP(+)) (272 aa).

Shikimate is bound by residues 14 to 16 (SKS) and Thr61. Lys65 acts as the Proton acceptor in catalysis. Glu77 is a binding site for NADP(+). Residues Asn86 and Asp102 each contribute to the shikimate site. Residues 126–130 (GAGGA), 149–154 (NRTVSR), and Met213 each bind NADP(+). Residue Tyr215 participates in shikimate binding. Gly237 provides a ligand contact to NADP(+).

It belongs to the shikimate dehydrogenase family. As to quaternary structure, homodimer.

It catalyses the reaction shikimate + NADP(+) = 3-dehydroshikimate + NADPH + H(+). The protein operates within metabolic intermediate biosynthesis; chorismate biosynthesis; chorismate from D-erythrose 4-phosphate and phosphoenolpyruvate: step 4/7. Its function is as follows. Involved in the biosynthesis of the chorismate, which leads to the biosynthesis of aromatic amino acids. Catalyzes the reversible NADPH linked reduction of 3-dehydroshikimate (DHSA) to yield shikimate (SA). This chain is Shikimate dehydrogenase (NADP(+)), found in Shigella boydii serotype 4 (strain Sb227).